Here is a 153-residue protein sequence, read N- to C-terminus: 3-hydroxyacyl-[acyl-carrier-protein] dehydratase FabZ (153 aa).

Histidine 54 is an active-site residue.

This sequence belongs to the thioester dehydratase family. FabZ subfamily.

It is found in the cytoplasm. The catalysed reaction is a (3R)-hydroxyacyl-[ACP] = a (2E)-enoyl-[ACP] + H2O. Its function is as follows. Involved in unsaturated fatty acids biosynthesis. Catalyzes the dehydration of short chain beta-hydroxyacyl-ACPs and long chain saturated and unsaturated beta-hydroxyacyl-ACPs. This Shewanella pealeana (strain ATCC 700345 / ANG-SQ1) protein is 3-hydroxyacyl-[acyl-carrier-protein] dehydratase FabZ.